The primary structure comprises 209 residues: Putative cardiolipin synthase (209 aa).

4 helical membrane passes run 27-47, 82-102, 126-146, and 157-177; these read AFVYVVLSAHANGWGVAILVF, VTVPIVFGLSGIVPWWFVLTL, VTYVGKAATFGFMVGFPTILL, and LLACGWAFLIWGMYAYLWAFV.

It belongs to the CDP-alcohol phosphatidyltransferase class-I family.

It is found in the cell membrane. It carries out the reaction a CDP-1,2-diacyl-sn-glycerol + a 1,2-diacyl-sn-glycero-3-phospho-(1'-sn-glycerol) = a cardiolipin + CMP + H(+). It participates in lipid metabolism; phospholipid metabolism. Its function is as follows. May catalyze the biosynthesis of cardiolipin from phosphatidylglycerol (PG) and CDP-diacylglycerol. In Mycobacterium bovis (strain ATCC BAA-935 / AF2122/97), this protein is Putative cardiolipin synthase.